The following is a 121-amino-acid chain: uncharacterized protein (121 aa).

Residues 8-37 (KQLMVCRDEIKKLKLKEKEAKNRILTYLKN) adopt a coiled-coil conformation.

This is an uncharacterized protein from Aedes vexans (Inland floodwater mosquito).